Here is a 330-residue protein sequence, read N- to C-terminus: NADH-quinone oxidoreductase subunit H (330 aa).

Transmembrane regions (helical) follow at residues 5 to 25 (LFFI…IACL), 44 to 64 (IGPD…MIKL), 78 to 98 (FIFL…LAPI), 122 to 142 (VLYV…AGLA), 156 to 176 (VMGL…VIMI), 192 to 212 (IFGW…MASF), 240 to 260 (MRWA…SIVI), 271 to 293 (FWFV…FFLW), and 310 to 330 (CWKI…IALI).

This sequence belongs to the complex I subunit 1 family. In terms of assembly, NDH-1 is composed of 14 different subunits. Subunits NuoA, H, J, K, L, M, N constitute the membrane sector of the complex.

It is found in the cell inner membrane. It carries out the reaction a quinone + NADH + 5 H(+)(in) = a quinol + NAD(+) + 4 H(+)(out). Functionally, NDH-1 shuttles electrons from NADH, via FMN and iron-sulfur (Fe-S) centers, to quinones in the respiratory chain. The immediate electron acceptor for the enzyme in this species is believed to be ubiquinone. Couples the redox reaction to proton translocation (for every two electrons transferred, four hydrogen ions are translocated across the cytoplasmic membrane), and thus conserves the redox energy in a proton gradient. This subunit may bind ubiquinone. This is NADH-quinone oxidoreductase subunit H from Campylobacter curvus (strain 525.92).